The sequence spans 350 residues: Solute carrier family 35 member E4 (350 aa).

Residues 19-30 (GAAAGGAQAAGP) are compositionally biased toward low complexity. The segment at 19 to 42 (GAAAGGAQAAGPPEWPPGSPQALR) is disordered. Helical transmembrane passes span 51-71 (MAAL…KWIF), 73-93 (VHGF…AALA), 110-132 (VLLL…RAVP), 135-155 (LAQL…ALLL), 218-238 (VTLL…AALV), 258-278 (ILLS…LLAL), 279-299 (TSAL…LILS), and 312-332 (YVGI…EFVA). In terms of domain architecture, EamA spans 125–179 (NVGLRAVPLDLAQLVTTTTPLFTLALSALLLGRRHHPLQLAAMGPLCLGAACSLA).

This sequence belongs to the TPT transporter family. SLC35E subfamily.

The protein resides in the membrane. In terms of biological role, putative transporter. In Homo sapiens (Human), this protein is Solute carrier family 35 member E4 (SLC35E4).